Here is a 92-residue protein sequence, read N- to C-terminus: Transcription factor PRE5 (92 aa).

The 56-residue stretch at 4 to 59 (RRSRQTSNASRISDDQMIDLVSKLRQFLPEIHERRRSDKVSASKVLQETCNYIRKL) folds into the bHLH domain.

Belongs to the bHLH protein family. In terms of assembly, interacts with IBH1.

The protein resides in the nucleus. Functionally, atypical and probable non DNA-binding bHLH transcription factor that integrates multiple signaling pathways to regulate cell elongation and plant development. May have a regulatory role in various aspects of gibberellin-dependent growth and development. This Arabidopsis thaliana (Mouse-ear cress) protein is Transcription factor PRE5 (PRE5).